Consider the following 55-residue polypeptide: uncharacterized protein (55 aa).

Positions 17–44 (QNVNIALTKKRLDTAQQNADQTLKMIQH) form a coiled coil.

This is an uncharacterized protein from Bacillus subtilis (strain 168).